A 195-amino-acid chain; its full sequence is Imidazoleglycerol-phosphate dehydratase (195 aa).

It belongs to the imidazoleglycerol-phosphate dehydratase family.

It localises to the cytoplasm. It catalyses the reaction D-erythro-1-(imidazol-4-yl)glycerol 3-phosphate = 3-(imidazol-4-yl)-2-oxopropyl phosphate + H2O. It functions in the pathway amino-acid biosynthesis; L-histidine biosynthesis; L-histidine from 5-phospho-alpha-D-ribose 1-diphosphate: step 6/9. This is Imidazoleglycerol-phosphate dehydratase from Burkholderia vietnamiensis (strain G4 / LMG 22486) (Burkholderia cepacia (strain R1808)).